The primary structure comprises 251 residues: Small ribosomal subunit protein uS2 (251 aa).

Belongs to the universal ribosomal protein uS2 family.

This Chlorobium chlorochromatii (strain CaD3) protein is Small ribosomal subunit protein uS2.